The primary structure comprises 180 residues: uncharacterized protein (180 aa).

The interval 138–180 (SVMPVPMPQQNSDNGSTPHIVDSSKSKDKSSNDGDNGVFTGDE) is disordered. The segment covering 145–154 (PQQNSDNGST) has biased composition (polar residues). Over residues 159-169 (DSSKSKDKSSN) the composition is skewed to basic and acidic residues.

This is an uncharacterized protein from Acidianus filamentous virus 2 (isolate Italy/Pozzuoli) (AFV-2).